A 585-amino-acid polypeptide reads, in one-letter code: Aspartate--tRNA ligase (585 aa).

Glu-173 contributes to the L-aspartate binding site. The tract at residues 197–200 (QTLK) is aspartate. Arg-219 is an L-aspartate binding site. ATP-binding positions include 219–221 (RDE) and Gln-228. Position 446 (His-446) interacts with L-aspartate. Glu-480 is a binding site for ATP. Position 487 (Arg-487) interacts with L-aspartate. 532–535 (GLDR) is an ATP binding site.

This sequence belongs to the class-II aminoacyl-tRNA synthetase family. Type 1 subfamily. In terms of assembly, homodimer.

Its subcellular location is the cytoplasm. The enzyme catalyses tRNA(Asp) + L-aspartate + ATP = L-aspartyl-tRNA(Asp) + AMP + diphosphate. Catalyzes the attachment of L-aspartate to tRNA(Asp) in a two-step reaction: L-aspartate is first activated by ATP to form Asp-AMP and then transferred to the acceptor end of tRNA(Asp). This chain is Aspartate--tRNA ligase, found in Parabacteroides distasonis (strain ATCC 8503 / DSM 20701 / CIP 104284 / JCM 5825 / NCTC 11152).